The sequence spans 512 residues: 2,3-bisphosphoglycerate-independent phosphoglycerate mutase (512 aa).

Mn(2+)-binding residues include Asp-11 and Ser-61. Ser-61 (phosphoserine intermediate) is an active-site residue. Substrate-binding positions include His-122, 152 to 153, Arg-184, Arg-190, 259 to 262, and Lys-332; these read RD and RADR. Positions 399, 403, 440, 441, and 459 each coordinate Mn(2+).

The protein belongs to the BPG-independent phosphoglycerate mutase family. In terms of assembly, monomer. Mn(2+) is required as a cofactor.

The catalysed reaction is (2R)-2-phosphoglycerate = (2R)-3-phosphoglycerate. It participates in carbohydrate degradation; glycolysis; pyruvate from D-glyceraldehyde 3-phosphate: step 3/5. Catalyzes the interconversion of 2-phosphoglycerate and 3-phosphoglycerate. In Francisella philomiragia subsp. philomiragia (strain ATCC 25017 / CCUG 19701 / FSC 153 / O#319-036), this protein is 2,3-bisphosphoglycerate-independent phosphoglycerate mutase.